The chain runs to 301 residues: dTDP-4-dehydrorhamnose reductase (301 aa).

Residues 10–12, Asp-30, 39–40, and 63–65 contribute to the NADH site; these read GQV, DF, and AHT. NADPH is bound at residue 11 to 12; the sequence is QV. NADPH-binding positions include 39–40, 63–65, and Tyr-102; these read DF and AHT. Position 104-105 (104-105) interacts with dTDP-beta-L-rhamnose; the sequence is TD. Residues Tyr-129 and Lys-133 each contribute to the NADH site. NADPH is bound by residues Tyr-129 and Lys-133. Catalysis depends on Tyr-129, which acts as the Proton donor/acceptor. Trp-155 serves as a coordination point for dTDP-beta-L-rhamnose.

The protein belongs to the dTDP-4-dehydrorhamnose reductase family. As to quaternary structure, homodimer. Requires Mg(2+) as cofactor.

It catalyses the reaction dTDP-beta-L-rhamnose + NADP(+) = dTDP-4-dehydro-beta-L-rhamnose + NADPH + H(+). It participates in carbohydrate biosynthesis; dTDP-L-rhamnose biosynthesis. The protein operates within bacterial outer membrane biogenesis; LPS O-antigen biosynthesis. Its function is as follows. Involved in the biosynthesis of the dTDP-L-rhamnose which is an important component of lipopolysaccharide (LPS). Catalyzes the reduction of dTDP-6-deoxy-L-lyxo-4-hexulose to yield dTDP-L-rhamnose. RmlD uses NADH and NADPH nearly equally well. The polypeptide is dTDP-4-dehydrorhamnose reductase (Escherichia coli).